The chain runs to 647 residues: Protein INVOLVED IN DE NOVO 2 (647 aa).

Disordered regions lie at residues 1–20 (MGSTVILSSDDEDSDISESE) and 101–123 (SASEAEPSSKRQKNGNPIQDCDH). Over residues 9–20 (SDDEDSDISESE) the composition is skewed to acidic residues. Positions 253-508 (IAELTEEEAR…NIMKEWNTNI (256 aa)) form a coiled coil.

In terms of assembly, interacts with FMD1/IDNL1. Forms a complex with FMD1/IDNL1 and FMD2/INDL2. Can form homodimers. Interacts with MORC6.

In terms of biological role, forms a complex with FDM1/IDNL1 and FDM2/IDNL2 that is required for RNA-directed DNA methylation (RdDM) and that functions at a downstream step of the RdDM pathway and downstream of small interfering RNA (siRNA) formation. Required for de novo DNA methylation, siRNA accumulation and siRNA-mediated maintenance methylation. Required for several post-transcriptional gene silencing pathways. Binds double-stranded RNAs (dsRNAs) with 5'-overhangs through its XS domain. Binds long non-coding RNA (lncRNA) in an AGO4-dependent manner and associates with DRM2, resulting in DNA methylation of RdDM target loci. Mediates the silencing of a subset of MORC6 target loci. This chain is Protein INVOLVED IN DE NOVO 2, found in Arabidopsis thaliana (Mouse-ear cress).